A 499-amino-acid chain; its full sequence is Glycerol kinase (499 aa).

ADP is bound at residue Thr-12. Residues Thr-12, Thr-13, and Ser-14 each coordinate ATP. Thr-12 is a binding site for sn-glycerol 3-phosphate. ADP is bound at residue Arg-16. Sn-glycerol 3-phosphate is bound by residues Arg-82, Glu-83, and Tyr-134. Residues Arg-82, Glu-83, and Tyr-134 each coordinate glycerol. Residue His-230 is modified to Phosphohistidine; by HPr. Asp-244 lines the sn-glycerol 3-phosphate pocket. Glycerol-binding residues include Asp-244 and Gln-245. ADP-binding residues include Thr-266 and Gly-309. Thr-266, Gly-309, Gln-313, and Gly-410 together coordinate ATP. ADP-binding residues include Gly-410 and Asn-414.

It belongs to the FGGY kinase family. In terms of assembly, homotetramer and homodimer (in equilibrium). The phosphoenolpyruvate-dependent sugar phosphotransferase system (PTS), including enzyme I, and histidine-containing protein (HPr) are required for the phosphorylation, which leads to the activation of the enzyme.

It carries out the reaction glycerol + ATP = sn-glycerol 3-phosphate + ADP + H(+). It functions in the pathway polyol metabolism; glycerol degradation via glycerol kinase pathway; sn-glycerol 3-phosphate from glycerol: step 1/1. With respect to regulation, activated by phosphorylation and inhibited by fructose 1,6-bisphosphate (FBP). Functionally, key enzyme in the regulation of glycerol uptake and metabolism. Catalyzes the phosphorylation of glycerol to yield sn-glycerol 3-phosphate. The sequence is that of Glycerol kinase from Staphylococcus haemolyticus (strain JCSC1435).